Reading from the N-terminus, the 193-residue chain is Fe/S biogenesis protein NfuA (193 aa).

Residues Cys-150 and Cys-153 each contribute to the [4Fe-4S] cluster site.

Belongs to the NfuA family. As to quaternary structure, homodimer. It depends on [4Fe-4S] cluster as a cofactor.

In terms of biological role, involved in iron-sulfur cluster biogenesis. Binds a 4Fe-4S cluster, can transfer this cluster to apoproteins, and thereby intervenes in the maturation of Fe/S proteins. Could also act as a scaffold/chaperone for damaged Fe/S proteins. This is Fe/S biogenesis protein NfuA from Histophilus somni (strain 129Pt) (Haemophilus somnus).